A 287-amino-acid polypeptide reads, in one-letter code: Diaminopimelate epimerase (287 aa).

Substrate is bound by residues Asn15 and Asn66. Cys75 (proton donor) is an active-site residue. Residues 76–77 (GN), Asn170, Asn203, and 221–222 (ER) each bind substrate. The active-site Proton acceptor is the Cys230. 231-232 (GT) contacts substrate.

The protein belongs to the diaminopimelate epimerase family. Homodimer.

The protein localises to the cytoplasm. It catalyses the reaction (2S,6S)-2,6-diaminopimelate = meso-2,6-diaminopimelate. It participates in amino-acid biosynthesis; L-lysine biosynthesis via DAP pathway; DL-2,6-diaminopimelate from LL-2,6-diaminopimelate: step 1/1. Catalyzes the stereoinversion of LL-2,6-diaminopimelate (L,L-DAP) to meso-diaminopimelate (meso-DAP), a precursor of L-lysine and an essential component of the bacterial peptidoglycan. This Desulfovibrio desulfuricans (strain ATCC 27774 / DSM 6949 / MB) protein is Diaminopimelate epimerase.